A 966-amino-acid chain; its full sequence is Leucine--tRNA ligase (966 aa).

Positions 71–82 match the 'HIGH' region motif; it reads PYPSGAGLHVGH. The disordered stretch occupies residues 561–580; it reads YSPRTFDPDDADTKPETPLS. Residues 571-580 are compositionally biased toward basic and acidic residues; sequence ADTKPETPLS. The 'KMSKS' region signature appears at 734–738; sequence KMGKS. ATP is bound at residue Lys737.

The protein belongs to the class-I aminoacyl-tRNA synthetase family.

The protein localises to the cytoplasm. It catalyses the reaction tRNA(Leu) + L-leucine + ATP = L-leucyl-tRNA(Leu) + AMP + diphosphate. This Streptomyces coelicolor (strain ATCC BAA-471 / A3(2) / M145) protein is Leucine--tRNA ligase.